Consider the following 634-residue polypeptide: 1-deoxy-D-xylulose-5-phosphate synthase (634 aa).

Residues histidine 74 and 115 to 117 (AHS) each bind thiamine diphosphate. Position 146 (aspartate 146) interacts with Mg(2+). Residues 147–148 (GA), asparagine 176, tyrosine 283, and glutamate 365 each bind thiamine diphosphate. Asparagine 176 is a Mg(2+) binding site.

Belongs to the transketolase family. DXPS subfamily. As to quaternary structure, homodimer. Mg(2+) serves as cofactor. Thiamine diphosphate is required as a cofactor.

The catalysed reaction is D-glyceraldehyde 3-phosphate + pyruvate + H(+) = 1-deoxy-D-xylulose 5-phosphate + CO2. It participates in metabolic intermediate biosynthesis; 1-deoxy-D-xylulose 5-phosphate biosynthesis; 1-deoxy-D-xylulose 5-phosphate from D-glyceraldehyde 3-phosphate and pyruvate: step 1/1. Functionally, catalyzes the acyloin condensation reaction between C atoms 2 and 3 of pyruvate and glyceraldehyde 3-phosphate to yield 1-deoxy-D-xylulose-5-phosphate (DXP). The chain is 1-deoxy-D-xylulose-5-phosphate synthase from Burkholderia lata (strain ATCC 17760 / DSM 23089 / LMG 22485 / NCIMB 9086 / R18194 / 383).